A 204-amino-acid chain; its full sequence is Recombination protein RecR (204 aa).

A C4-type zinc finger spans residues 58–75 (CSICQNVTDRGDDPCSIC). The 99-residue stretch at 83 to 181 (SKICVVESPP…EVTKIARGIP (99 aa)) folds into the Toprim domain.

It belongs to the RecR family.

May play a role in DNA repair. It seems to be involved in an RecBC-independent recombinational process of DNA repair. It may act with RecF and RecO. In Chlorobium phaeobacteroides (strain BS1), this protein is Recombination protein RecR.